A 1826-amino-acid chain; its full sequence is ATPase family AAA domain-containing protein 5 (1826 aa).

The residue at position 44 (Ser-44) is a Phosphoserine. Residue Lys-127 forms a Glycyl lysine isopeptide (Lys-Gly) (interchain with G-Cter in SUMO2) linkage. Disordered stretches follow at residues 170-254, 282-311, 323-367, 398-572, 588-623, 647-684, and 709-729; these read SIED…KRAD, PAVPACVPSGPGEAVKSGSEGELSGSCEPS, AQVH…RKSN, QQFM…EPGS, RSCSTPATNALGGTESEDAQDTIPVKASTPKSARTS, KFTRISTPKKSKKSSKKSETTEEELTSQKKKANSTSKN, and VVPLRRSSRHQARSAKEKSPE. Ser-215 is modified (phosphoserine). The segment covering 243-254 has biased composition (basic and acidic residues); the sequence is NDSRTHATKRAD. Residues 298-311 are compositionally biased toward low complexity; that stretch reads SGSEGELSGSCEPS. 2 positions are modified to phosphoserine: Ser-351 and Ser-366. The tract at residues 365–381 is interaction with WDR48; that stretch reads KSNVVIQEGQLELAVLE. Over residues 418–442 the composition is skewed to basic and acidic residues; sequence KPLEKQKDPSEKSVHEGDSSSEKII. Positions 445–456 are enriched in polar residues; the sequence is PNIQRVSSQGCL. Over residues 459-468 the composition is skewed to basic and acidic residues; the sequence is HADRGSFPKE. Basic residues predominate over residues 469 to 481; the sequence is KSKKPNKKGKKTR. The span at 487–505 shows a compositional bias: basic and acidic residues; sequence NREENIQKEKTAFSLKDEQ. Positions 540-559 are enriched in polar residues; that stretch reads DSVQMSLCNRNKSRSSSTPT. Phosphoserine occurs at positions 591 and 603. 2 positions are modified to phosphoserine: Ser-727 and Ser-801. Residues 965-1034 form a disordered region; sequence GKQASPQLQP…NLDPSRDSGT (70 aa). A compositionally biased stretch (basic and acidic residues) spans 1006 to 1019; that stretch reads EEMKGRSKDLDERI. Phosphoserine is present on Ser-1104. 1119–1126 contacts ATP; sequence GPTGVGKT. Residues 1183–1216 form a disordered region; it reads YNIGKSPKKLNSPGKVVTSPRKLPPSSPKTSGQK. The short motif at 1415–1419 is the LXCXE motif element; that stretch reads LVCSE. Disordered stretches follow at residues 1527 to 1552 and 1592 to 1611; these read PASMGHLTRKQSKDQPLRKSQKRKQK and SNPEIKTQNSGFKPHSVPQP. Residues 1612-1701 are interaction with RAD51 and RFC5; sequence PKTLAEKKCC…ATAEALSFTE (90 aa).

The protein belongs to the AAA ATPase family. As to quaternary structure, component of a heteropentameric replication factor ATAD5 RFC-like complex composed of one large subunit (ATAD5) and four small subunits (RFC2, RFC3, RFC4 and RFC5). Within the ATAD5 RFC-like complex, interacts with RFC2, RFC4 and RFC5. Within the ATAD5 RFC-like complex, interacts directly via-N terminal with RAD51; the interactions is enhanced under replication stress. Interacts with RB1 predominantly in G1 phase via its LXCXE motif. Interacts with RAD9A in growing cells. The interaction with RAD9A is reduced after exposure to DNA replication-inhibiting agents. Interacts with BRD4. Interacts with PCNA. Interacts with deubiquitinating enzyme USP1, and its associated factor, WDR48. In terms of processing, ATR may stimulate the RAD9A dissociation. Expressed ubiquitously in all cell lines like teratocarcinoma, cell lymphoma, lymphoma.

It is found in the nucleus. Its function is as follows. Has an important role in DNA replication and in maintaining genome integrity during replication stress. Involved in a RAD9A-related damage checkpoint, a pathway that is important in determining whether DNA damage is compatible with cell survival or whether it requires cell elimination by apoptosis. Modulates the RAD9A interaction with BCL2 and thereby induces DNA damage-induced apoptosis. Promotes PCNA deubiquitination by recruiting the ubiquitin-specific protease 1 (USP1) and WDR48 thereby down-regulating the error-prone damage bypass pathway. As component of the ATAD5 RFC-like complex, regulates the function of the DNA polymerase processivity factor PCNA by unloading the ring-shaped PCNA homotrimer from DNA after replication during the S phase of the cell cycle. This seems to be dependent on its ATPase activity. Plays important roles in restarting stalled replication forks under replication stress, by unloading the PCNA homotrimer from DNA and recruiting RAD51 possibly through an ATR-dependent manner. Ultimately this enables replication fork regression, breakage, and eventual fork restart. Both the PCNA unloading activity and the interaction with WDR48 are required to efficiently recruit RAD51 to stalled replication forks. Promotes the generation of MUS81-mediated single-stranded DNA-associated breaks in response to replication stress, which is an alternative pathway to restart stalled/regressed replication forks. This Mus musculus (Mouse) protein is ATPase family AAA domain-containing protein 5 (Atad5).